Here is a 360-residue protein sequence, read N- to C-terminus: Phospho-N-acetylmuramoyl-pentapeptide-transferase (360 aa).

At 1-25 (MLVWLAEHLVKYYSGFNVFSYLTFR) the chain is on the periplasmic side. The chain crosses the membrane as a helical span at residues 26-46 (AIVSLLTALFISLWMGPRMIA). The Cytoplasmic segment spans residues 47–71 (HLQKLSFGQVVRNDGPESHFSKRGT). Residues 72–92 (PTMGGIMILTAIVISVLLWAY) traverse the membrane as a helical segment. A topological domain (periplasmic) is located at residue P93. The helical transmembrane segment at 94–114 (SNPYVWCVLVVLVGYGVIGFV) threads the bilayer. The Cytoplasmic segment spans residues 115–131 (DDYRKVVRKDTKGLIAR). A helical membrane pass occupies residues 132–152 (WKYFWMSVIALGVAFALYLVG). The Periplasmic portion of the chain corresponds to 153-167 (KDTPATQLVVPFFKD). The chain crosses the membrane as a helical span at residues 168–188 (VMPQLGLFYILLAYFVIVGTG). The Cytoplasmic portion of the chain corresponds to 189-198 (NAVNLTDGLD). A helical membrane pass occupies residues 199 to 219 (GLAIMPTVFVAGGFALVAWAT). The Periplasmic segment spans residues 220–235 (GNMNFASYLHIPYLRH). A helical membrane pass occupies residues 236–256 (AGELVIVCTAIVGAGLGFLWF). Topologically, residues 257 to 262 (NTYPAQ) are cytoplasmic. A helical membrane pass occupies residues 263 to 283 (VFMGDVGSLALGGALGIIAVL). At 284–287 (LRQE) the chain is on the periplasmic side. A helical transmembrane segment spans residues 288–308 (FLLVIMGGVFVVETLSVILQV). The Cytoplasmic segment spans residues 309-337 (GSFKLRGQRIFRMAPIHHHYELKGWPEPR). Residues 338–358 (VIVRFWIISLMLVLIGLATLK) form a helical membrane-spanning segment. The Periplasmic segment spans residues 359–360 (VR).

The protein belongs to the glycosyltransferase 4 family. MraY subfamily. It depends on Mg(2+) as a cofactor.

It is found in the cell inner membrane. The catalysed reaction is UDP-N-acetyl-alpha-D-muramoyl-L-alanyl-gamma-D-glutamyl-meso-2,6-diaminopimeloyl-D-alanyl-D-alanine + di-trans,octa-cis-undecaprenyl phosphate = di-trans,octa-cis-undecaprenyl diphospho-N-acetyl-alpha-D-muramoyl-L-alanyl-D-glutamyl-meso-2,6-diaminopimeloyl-D-alanyl-D-alanine + UMP. It functions in the pathway cell wall biogenesis; peptidoglycan biosynthesis. Catalyzes the initial step of the lipid cycle reactions in the biosynthesis of the cell wall peptidoglycan: transfers peptidoglycan precursor phospho-MurNAc-pentapeptide from UDP-MurNAc-pentapeptide onto the lipid carrier undecaprenyl phosphate, yielding undecaprenyl-pyrophosphoryl-MurNAc-pentapeptide, known as lipid I. In Escherichia coli O157:H7, this protein is Phospho-N-acetylmuramoyl-pentapeptide-transferase.